A 315-amino-acid chain; its full sequence is Cobalamin biosynthesis protein CobD (315 aa).

The next 5 membrane-spanning stretches (helical) occupy residues 54 to 74 (GLLF…ILFL), 78 to 98 (IAYW…LAMT), 152 to 172 (ADGV…LALM), 203 to 223 (IANF…SFIL), and 295 to 315 (LLYM…LLLF).

This sequence belongs to the CobD/CbiB family.

Its subcellular location is the cell membrane. Its pathway is cofactor biosynthesis; adenosylcobalamin biosynthesis. In terms of biological role, converts cobyric acid to cobinamide by the addition of aminopropanol on the F carboxylic group. This is Cobalamin biosynthesis protein CobD from Listeria monocytogenes serovar 1/2a (strain ATCC BAA-679 / EGD-e).